Reading from the N-terminus, the 246-residue chain is Pyridoxine 5'-phosphate synthase (246 aa).

Asn7 serves as a coordination point for 3-amino-2-oxopropyl phosphate. Position 9-10 (9-10 (DH)) interacts with 1-deoxy-D-xylulose 5-phosphate. Arg18 provides a ligand contact to 3-amino-2-oxopropyl phosphate. Catalysis depends on His43, which acts as the Proton acceptor. Positions 45 and 50 each coordinate 1-deoxy-D-xylulose 5-phosphate. Glu70 (proton acceptor) is an active-site residue. Thr100 lines the 1-deoxy-D-xylulose 5-phosphate pocket. The active-site Proton donor is His190. 3-amino-2-oxopropyl phosphate-binding positions include Gly191 and 212-213 (GH).

It belongs to the PNP synthase family. In terms of assembly, homooctamer; tetramer of dimers.

Its subcellular location is the cytoplasm. It carries out the reaction 3-amino-2-oxopropyl phosphate + 1-deoxy-D-xylulose 5-phosphate = pyridoxine 5'-phosphate + phosphate + 2 H2O + H(+). Its pathway is cofactor biosynthesis; pyridoxine 5'-phosphate biosynthesis; pyridoxine 5'-phosphate from D-erythrose 4-phosphate: step 5/5. Functionally, catalyzes the complicated ring closure reaction between the two acyclic compounds 1-deoxy-D-xylulose-5-phosphate (DXP) and 3-amino-2-oxopropyl phosphate (1-amino-acetone-3-phosphate or AAP) to form pyridoxine 5'-phosphate (PNP) and inorganic phosphate. This is Pyridoxine 5'-phosphate synthase from Bordetella petrii (strain ATCC BAA-461 / DSM 12804 / CCUG 43448).